Consider the following 112-residue polypeptide: Large ribosomal subunit protein eL33w (112 aa).

It belongs to the eukaryotic ribosomal protein eL33 family.

This Arabidopsis thaliana (Mouse-ear cress) protein is Large ribosomal subunit protein eL33w (RPL35AA).